Reading from the N-terminus, the 251-residue chain is tRNA (guanine-N(1)-)-methyltransferase (251 aa).

Residues glycine 113 and 133-138 (IGDYVL) each bind S-adenosyl-L-methionine.

The protein belongs to the RNA methyltransferase TrmD family. Homodimer.

The protein resides in the cytoplasm. The enzyme catalyses guanosine(37) in tRNA + S-adenosyl-L-methionine = N(1)-methylguanosine(37) in tRNA + S-adenosyl-L-homocysteine + H(+). In terms of biological role, specifically methylates guanosine-37 in various tRNAs. This Pectobacterium atrosepticum (strain SCRI 1043 / ATCC BAA-672) (Erwinia carotovora subsp. atroseptica) protein is tRNA (guanine-N(1)-)-methyltransferase.